The following is a 466-amino-acid chain: MPLNLLQDWCRGEHLNTQRSMLILGIPEDCSEDEFEETLHEALKHLGRYRIIGRMFRREENAQAFLVELARDFDYALVPREIEGKGGPWEVVVKPPHSDDEFLNRLNHFLEEERRTVSDMNRVLGTHSNHSPTKTTISADFWVWAQTLGAVMQPLLEQMLYRELRVFSGNTISIPGLLAFDSWLEHTTEMLQMWQVPEVEKRRRLMECLRGPALQVVNVLRANNAAITVKECLEALRQVFGSVDNRKIAQLKFCKAYQEPGEKVSSFVVRLETLLQKALEKNAISRKNVNQTRLKRILGGAILSAKLREKLKMLKQRRRPPGFLALVKLFREEEEEWEATRGSERSCYEGLELGPSPSNIGSEERELFVPAFGSVLEERPYQGSRRRRHRRRGQHRKGGVPRDDSQGTRKQNYDTFCYSCGEDGHIRVHCFNPSNRTLVKQKRQAAMEKGNRSWAWEKSHPKPKTK.

The tract at residues 379–408 (RPYQGSRRRRHRRRGQHRKGGVPRDDSQGT) is disordered. Residues 384–399 (SRRRRHRRRGQHRKGG) are compositionally biased toward basic residues. The CCHC-type zinc finger occupies 415–432 (TFCYSCGEDGHIRVHCFN). A disordered region spans residues 441 to 466 (QKRQAAMEKGNRSWAWEKSHPKPKTK). The segment covering 445 to 460 (AAMEKGNRSWAWEKSH) has biased composition (basic and acidic residues).

Belongs to the PNMA family. As to expression, expressed in the cerebrum and cerebellum.

It is found in the nucleus. The protein localises to the nucleolus. This Mus musculus (Mouse) protein is Paraneoplastic antigen Ma3 homolog (Pnma3).